Consider the following 741-residue polypeptide: Fibrinogen alpha chain (741 aa).

Residues 1–18 (MIPVTILCVLLCLNLAWA) form the signal peptide. Position 19 is a pyrrolidone carboxylic acid (Gln-19). Positions 67 to 506 (CCRMQGIIDD…STRRSYNGKD (440 aa)) form a coiled coil. The interval 270–307 (VAEARGDSSPSHTGKLITSSHRRESPSLVDKTSSASSV) is disordered. The span at 277 to 288 (SSPSHTGKLITS) shows a compositional bias: polar residues. Cys-310 and Cys-341 form a disulfide bridge. 2 stretches are compositionally biased toward low complexity: residues 381–398 (STSS…HVTG) and 435–449 (SASH…SSSS). A disordered region spans residues 381 to 510 (STSSRHSIGS…SYNGKDCDDI (130 aa)). The span at 450 to 459 (FNKGGSTFET) shows a compositional bias: polar residues. Positions 498–739 (TRRSYNGKDC…VVRMKIRPLE (242 aa)) constitute a Fibrinogen C-terminal domain. 4 residues coordinate Ca(2+): Asp-666, Asp-668, Trp-670, and Glu-672. Cys-674 and Cys-687 are disulfide-bonded.

In terms of assembly, heterohexamer; disulfide linked. Contains 2 sets of 3 non-identical chains (alpha, beta and gamma). The 2 heterotrimers are in head to head conformation with the N-termini in a small central domain. Post-translationally, conversion of fibrinogen to fibrin is triggered by thrombin, which cleaves fibrinopeptides A and B from alpha and beta chains, and thus exposes the N-terminal polymerization sites responsible for the formation of the soft clot. The soft clot is converted into the hard clot by factor XIIIA which catalyzes the epsilon-(gamma-glutamyl)lysine cross-linking between gamma chains (stronger) and between alpha chains (weaker) of different monomers. Forms F13A-mediated cross-links between a glutamine and the epsilon-amino group of a lysine residue, forming fibronectin-fibrinogen heteropolymers.

It is found in the secreted. Its function is as follows. Cleaved by the protease thrombin to yield monomers which, together with fibrinogen beta (FGB) and fibrinogen gamma (FGG), polymerize to form an insoluble fibrin matrix. Fibrin has a major function in hemostasis as one of the primary components of blood clots. The sequence is that of Fibrinogen alpha chain (FGA) from Gallus gallus (Chicken).